The following is a 240-amino-acid chain: 4-hydroxy-tetrahydrodipicolinate reductase (240 aa).

NAD(+) is bound by residues 79 to 81 (ATT) and 103 to 106 (SANM). The active-site Proton donor/acceptor is the His-135. His-136 provides a ligand contact to (S)-2,3,4,5-tetrahydrodipicolinate. Catalysis depends on Lys-139, which acts as the Proton donor. 145–146 (GT) is a (S)-2,3,4,5-tetrahydrodipicolinate binding site.

Belongs to the DapB family.

The protein localises to the cytoplasm. The catalysed reaction is (S)-2,3,4,5-tetrahydrodipicolinate + NAD(+) + H2O = (2S,4S)-4-hydroxy-2,3,4,5-tetrahydrodipicolinate + NADH + H(+). The enzyme catalyses (S)-2,3,4,5-tetrahydrodipicolinate + NADP(+) + H2O = (2S,4S)-4-hydroxy-2,3,4,5-tetrahydrodipicolinate + NADPH + H(+). It functions in the pathway amino-acid biosynthesis; L-lysine biosynthesis via DAP pathway; (S)-tetrahydrodipicolinate from L-aspartate: step 4/4. Functionally, catalyzes the conversion of 4-hydroxy-tetrahydrodipicolinate (HTPA) to tetrahydrodipicolinate. This is 4-hydroxy-tetrahydrodipicolinate reductase from Staphylococcus aureus (strain bovine RF122 / ET3-1).